Reading from the N-terminus, the 89-residue chain is UPF0298 protein GTNG_0961 (89 aa).

Belongs to the UPF0298 family.

It is found in the cytoplasm. This chain is UPF0298 protein GTNG_0961, found in Geobacillus thermodenitrificans (strain NG80-2).